We begin with the raw amino-acid sequence, 261 residues long: Cytochrome c oxidase subunit 3 (261 aa).

At 1–15 the chain is on the mitochondrial matrix side; that stretch reads MTHQTHAYHMVNPSP. Residues 16 to 34 form a helical membrane-spanning segment; the sequence is WPLTGALSALLMTSGLTMW. Topologically, residues 35 to 40 are mitochondrial intermembrane; the sequence is FHFNSM. A helical membrane pass occupies residues 41-66; it reads LLLSLGLLTNTLTMYQWWRDIIREST. The Mitochondrial matrix portion of the chain corresponds to 67-72; it reads FQGHHT. Residues 73–105 traverse the membrane as a helical segment; the sequence is SVVQKGLRYGMILFIISEVLFFTGFFWAFYHSS. At 106 to 128 the chain is on the mitochondrial intermembrane side; the sequence is LAPTPELGGCWPPTGIHPLNPLE. Residues 129 to 152 form a helical membrane-spanning segment; that stretch reads VPLLNTSILLASGVSITWAHHSLM. The Mitochondrial matrix portion of the chain corresponds to 153–155; the sequence is EGD. Residues 156 to 183 form a helical membrane-spanning segment; that stretch reads RKHMIQALSITIALGVYFTLLQASEYYE. At 184-190 the chain is on the mitochondrial intermembrane side; it reads APFTISD. The helical transmembrane segment at 191–223 threads the bilayer; that stretch reads GVYGSTFFVATGFHGLHVIIGSTFLAVCLLRQL. Over 224 to 232 the chain is Mitochondrial matrix; it reads KFHFTSNHH. The chain crosses the membrane as a helical span at residues 233 to 256; it reads FGFEAAAWYWHFVDVVWLFLYVSI. Residues 257-261 lie on the Mitochondrial intermembrane side of the membrane; it reads YWWGS.

Belongs to the cytochrome c oxidase subunit 3 family. In terms of assembly, component of the cytochrome c oxidase (complex IV, CIV), a multisubunit enzyme composed of 14 subunits. The complex is composed of a catalytic core of 3 subunits MT-CO1, MT-CO2 and MT-CO3, encoded in the mitochondrial DNA, and 11 supernumerary subunits COX4I, COX5A, COX5B, COX6A, COX6B, COX6C, COX7A, COX7B, COX7C, COX8 and NDUFA4, which are encoded in the nuclear genome. The complex exists as a monomer or a dimer and forms supercomplexes (SCs) in the inner mitochondrial membrane with NADH-ubiquinone oxidoreductase (complex I, CI) and ubiquinol-cytochrome c oxidoreductase (cytochrome b-c1 complex, complex III, CIII), resulting in different assemblies (supercomplex SCI(1)III(2)IV(1) and megacomplex MCI(2)III(2)IV(2)).

The protein localises to the mitochondrion inner membrane. The enzyme catalyses 4 Fe(II)-[cytochrome c] + O2 + 8 H(+)(in) = 4 Fe(III)-[cytochrome c] + 2 H2O + 4 H(+)(out). In terms of biological role, component of the cytochrome c oxidase, the last enzyme in the mitochondrial electron transport chain which drives oxidative phosphorylation. The respiratory chain contains 3 multisubunit complexes succinate dehydrogenase (complex II, CII), ubiquinol-cytochrome c oxidoreductase (cytochrome b-c1 complex, complex III, CIII) and cytochrome c oxidase (complex IV, CIV), that cooperate to transfer electrons derived from NADH and succinate to molecular oxygen, creating an electrochemical gradient over the inner membrane that drives transmembrane transport and the ATP synthase. Cytochrome c oxidase is the component of the respiratory chain that catalyzes the reduction of oxygen to water. Electrons originating from reduced cytochrome c in the intermembrane space (IMS) are transferred via the dinuclear copper A center (CU(A)) of subunit 2 and heme A of subunit 1 to the active site in subunit 1, a binuclear center (BNC) formed by heme A3 and copper B (CU(B)). The BNC reduces molecular oxygen to 2 water molecules using 4 electrons from cytochrome c in the IMS and 4 protons from the mitochondrial matrix. This chain is Cytochrome c oxidase subunit 3 (MT-CO3), found in Sus scrofa (Pig).